Reading from the N-terminus, the 282-residue chain is 3-methyl-2-oxobutanoate hydroxymethyltransferase (282 aa).

The Mg(2+) site is built by Asp-45 and Asp-84. Residues 45 to 46 (DS), Asp-84, and Lys-114 contribute to the 3-methyl-2-oxobutanoate site. Glu-116 is a Mg(2+) binding site. The active-site Proton acceptor is the Glu-183.

Belongs to the PanB family. Homodecamer; pentamer of dimers. Requires Mg(2+) as cofactor.

It is found in the cytoplasm. The enzyme catalyses 3-methyl-2-oxobutanoate + (6R)-5,10-methylene-5,6,7,8-tetrahydrofolate + H2O = 2-dehydropantoate + (6S)-5,6,7,8-tetrahydrofolate. It participates in cofactor biosynthesis; (R)-pantothenate biosynthesis; (R)-pantoate from 3-methyl-2-oxobutanoate: step 1/2. Functionally, catalyzes the reversible reaction in which hydroxymethyl group from 5,10-methylenetetrahydrofolate is transferred onto alpha-ketoisovalerate to form ketopantoate. The protein is 3-methyl-2-oxobutanoate hydroxymethyltransferase of Syntrophobacter fumaroxidans (strain DSM 10017 / MPOB).